The sequence spans 617 residues: Mitochondrial Rho GTPase 2 (617 aa).

The Cytoplasmic portion of the chain corresponds to 1 to 590 (MKRDVRILLL…LNGSDMSSTS (590 aa)). Residues 2-168 (KRDVRILLLG…FYYAQKAVLH (167 aa)) enclose the Miro 1 domain. Residues Gly-16, Lys-17, Thr-18, and Ser-19 each contribute to the GTP site. Residue Thr-18 participates in Mg(2+) binding. Asp-57 lines the Mg(2+) pocket. Ser-59, Asn-118, Lys-119, Asp-121, Ala-149, and Lys-150 together coordinate GTP. EF-hand domains lie at 184–219 (QCVR…CFGN) and 304–339 (LGHQ…LPYM). Ca(2+) contacts are provided by Asp-197, Asp-199, Asp-201, Glu-208, Asp-317, Asp-319, Asp-321, and Glu-328. Positions 416-578 (RTVFLCKVIG…YSKLTWAAMY (163 aa)) constitute a Miro 2 domain. GTP contacts are provided by Gly-428, Gly-430, Lys-431, and Thr-432. Thr-432 and Glu-474 together coordinate Mg(2+). GTP contacts are provided by Lys-528 and Asp-530. The chain crosses the membrane as a helical; Anchor for type IV membrane protein span at residues 591–613 (FWLRVTLGATIAAMLGFALYRAF). Residues 614–617 (SRHK) lie on the Mitochondrial intermembrane side of the membrane.

Belongs to the mitochondrial Rho GTPase family. In terms of assembly, homodimer.

Its subcellular location is the mitochondrion outer membrane. The catalysed reaction is GTP + H2O = GDP + phosphate + H(+). It carries out the reaction ATP + H2O = ADP + phosphate + H(+). The enzyme catalyses UTP + H2O = UDP + phosphate + H(+). Its function is as follows. Atypical mitochondrial nucleoside-triphosphatase (NTPase) involved in mitochondrial trafficking. Probably involved in control of anterograde transport of mitochondria and their subcellular distribution. Can hydrolyze GTP, ATP and UTP. This Danio rerio (Zebrafish) protein is Mitochondrial Rho GTPase 2 (rhot2).